A 330-amino-acid chain; its full sequence is Phosphate acyltransferase (330 aa).

The protein belongs to the PlsX family. Homodimer. Probably interacts with PlsY.

Its subcellular location is the cytoplasm. The enzyme catalyses a fatty acyl-[ACP] + phosphate = an acyl phosphate + holo-[ACP]. It functions in the pathway lipid metabolism; phospholipid metabolism. Its function is as follows. Catalyzes the reversible formation of acyl-phosphate (acyl-PO(4)) from acyl-[acyl-carrier-protein] (acyl-ACP). This enzyme utilizes acyl-ACP as fatty acyl donor, but not acyl-CoA. The polypeptide is Phosphate acyltransferase (Lactobacillus delbrueckii subsp. bulgaricus (strain ATCC 11842 / DSM 20081 / BCRC 10696 / JCM 1002 / NBRC 13953 / NCIMB 11778 / NCTC 12712 / WDCM 00102 / Lb 14)).